The chain runs to 597 residues: Apurinic-apyrimidinic endonuclease 1 (597 aa).

The segment covering 232-246 (YNNDTKYLSNPKGVT) has biased composition (polar residues). The tract at residues 232–296 (YNNDTKYLSN…IPPIPKNTED (65 aa)) is disordered. Residues 265-274 (NNNNNNNNNK) show a composition bias toward low complexity. 9 residues coordinate Zn(2+): His380, His420, Glu456, Asp490, His493, His527, Asp540, His542, and Glu572. A Mn(2+)-binding site is contributed by His493. Mn(2+) is bound by residues Asp540 and His542.

The protein belongs to the AP endonuclease 2 family. Zn(2+) serves as cofactor. It depends on Mn(2+) as a cofactor. Post-translationally, may be proteolytically cleaved into a 59 kDa form.

The protein localises to the mitochondrion. With respect to regulation, apurinic/apyrimidinic (AP) endonuclease activity is enhanced with increasing concentrations of Mn(2+), while Zn(2+) initially enhances activity but subsequently inhibits activity in a concentration-dependent manner. Co(2+) inhibits apurinic/apyrimidinic (AP) endonuclease activity at concentrations greater than 2.5 mM. In terms of biological role, plays a role in mitochondrial DNA base excision repair (BER) pathway induced by oxidative stress. Has apurinic/apyrimidinic (AP) endonuclease activity towards double-stranded DNA (dsDNA) with a preference for C as opposite base. Has 3'-phosphatase activity; removes 3'-phosphate from blunt-end, recessed, and gapped DNA templates and thus, removes 3'-blocks for DNA polymerase activity during BER. Lacks 3'-5' exonuclease activity and does not cleave damaged bases by nucleotide incision repair (NIR). The chain is Apurinic-apyrimidinic endonuclease 1 from Plasmodium falciparum (isolate 3D7).